The chain runs to 548 residues: Alpha-1,3-mannosyl-glycoprotein 4-beta-N-acetylglucosaminyltransferase B (548 aa).

The Cytoplasmic portion of the chain corresponds to 1-7; it reads MRLRNGT. A helical; Signal-anchor for type II membrane protein membrane pass occupies residues 8–28; the sequence is FLTLLLFCLCAFLSLSWYAAL. The Lumenal portion of the chain corresponds to 29-548; the sequence is SGQKGDVVDI…LSEIFLKKAD (520 aa). Residues 36-83 are a coiled coil; sequence VDIYQREFLALRDRLHAAEQESLKRSKELNLVLEEIKRAVSERQALRD. Residues Asn-87 and Asn-103 are each glycosylated (N-linked (GlcNAc...) asparagine).

This sequence belongs to the glycosyltransferase 54 family. As to quaternary structure, interacts with SLC35A3. Requires a divalent metal cation as cofactor. In terms of processing, N-glycosylated.

The protein localises to the golgi apparatus membrane. It catalyses the reaction N(4)-{beta-D-GlcNAc-(1-&gt;2)-alpha-D-Man-(1-&gt;3)-[beta-D-GlcNAc-(1-&gt;2)-alpha-D-Man-(1-&gt;6)]-beta-D-Man-(1-&gt;4)-beta-D-GlcNAc-(1-&gt;4)-beta-D-GlcNAc}-L-asparaginyl-[protein] + UDP-N-acetyl-alpha-D-glucosamine = N(4)-{beta-D-GlcNAc-(1-&gt;2)-[beta-D-GlcNAc-(1-&gt;4)]-alpha-D-Man-(1-&gt;3)-[beta-D-GlcNAc-(1-&gt;2)-alpha-D-Man-(1-&gt;6)]-beta-D-Man-(1-&gt;4)-beta-D-GlcNAc-(1-&gt;4)-beta-D-GlcNAc}-L-asparaginyl-[protein] + UDP + H(+). It carries out the reaction an N(4)-{beta-D-GlcNAc-(1-&gt;2)-alpha-D-Man-(1-&gt;3)-[alpha-D-Man-(1-&gt;6)]-beta-D-Man-(1-&gt;4)-beta-D-GlcNAc-(1-&gt;4)-beta-D-GlcNAc}-L-asparaginyl-[protein] + UDP-N-acetyl-alpha-D-glucosamine = an N(4)-{beta-D-GlcNAc-(1-&gt;2)-[beta-D-GlcNAc-(1-&gt;4)]-alpha-D-Man-(1-&gt;3)-[alpha-D-Man-(1-&gt;6)]-beta-D-Man-(1-&gt;4)-beta-D-GlcNAc-(1-&gt;4)-beta-D-GlcNAc}-L-asparaginyl-[protein] + UDP + H(+). The enzyme catalyses an N(4)-{beta-D-GlcNAc-(1-&gt;2)-alpha-D-Man-(1-&gt;3)-[beta-D-GlcNAc-(1-&gt;2)-[beta-D-GlcNAc-(1-&gt;6)]-alpha-D-Man-(1-&gt;6)]-beta-D-Man-(1-&gt;4)-beta-D-GlcNAc-(1-&gt;4)-beta-D-GlcNAc}-L-asparaginyl-[protein] + UDP-N-acetyl-alpha-D-glucosamine = an N(4)-{beta-D-GlcNAc-(1-&gt;2)-[beta-D-GlcNAc-(1-&gt;4)]-alpha-D-Man-(1-&gt;3)-[beta-D-GlcNAc-(1-&gt;2)-[beta-D-GlcNAc-(1-&gt;6)]-alpha-D-Man-(1-&gt;6)]-beta-D-Man-(1-&gt;4)-beta-D-GlcNAc-(1-&gt;4)-beta-D-GlcNAc}-L-asparaginyl-[protein] + UDP + H(+). The catalysed reaction is an N(4)-{beta-D-GlcNAc-(1-&gt;2)-alpha-D-Man-(1-&gt;3)-[beta-D-GlcNAc-(1-&gt;2)-alpha-D-Man-(1-&gt;6)]-beta-D-Man-(1-&gt;4)-beta-D-GlcNAc-(1-&gt;4)-[alpha-L-Fuc-(1-&gt;6)]-beta-D-GlcNAc}-L-asparaginyl-[protein] + UDP-N-acetyl-alpha-D-glucosamine = N(4)-{beta-D-GlcNAc-(1-&gt;2)-[beta-D-GlcNAc-(1-&gt;4)]-alpha-D-Man-(1-&gt;3)-[beta-D-GlcNAc-(1-&gt;2)-alpha-D-Man-(1-&gt;6)]-beta-D-Man-(1-&gt;4)-beta-D-GlcNAc-(1-&gt;4)-[alpha-L-Fuc-(1-&gt;6)]-beta-D-GlcNAc}-asparaginyl-[protein] + UDP + H(+). It catalyses the reaction an N(4)-{beta-D-GlcNAc-(1-&gt;2)-alpha-D-Man-(1-&gt;3)-[beta-D-Gal-(1-&gt;4)-beta-D-GlcNAc-(1-&gt;2)-alpha-D-Man-(1-&gt;6)]-beta-D-Man-(1-&gt;4)-beta-D-GlcNAc-(1-&gt;4)-beta-D-GlcNAc}-L-asparaginyl-[protein] + UDP-N-acetyl-alpha-D-glucosamine = an N(4)-{beta-D-GlcNAc-(1-&gt;2)-[beta-D-GlcNAc-(1-&gt;4)]-alpha-D-Man-(1-&gt;3)-[beta-D-Gal-(1-&gt;4)-beta-D-GlcNAc-(1-&gt;2)-alpha-D-Man-(1-&gt;6)]-beta-D-Man-(1-&gt;4)-beta-D-GlcNAc-(1-&gt;4)-beta-D-GlcNAc}-L-asparaginyl-[protein] + UDP + H(+). It carries out the reaction N(4)-{beta-D-GlcNAc-(1-&gt;2)-alpha-D-Man-(1-&gt;3)-[alpha-D-Man-(1-&gt;3)-{alpha-D-Man-(1-&gt;6)}-alpha-D-Man-(1-&gt;6)]-beta-D-Man-(1-&gt;4)-beta-D-GlcNAc-(1-&gt;4)-beta-D-GlcNAc}-asparaginyl-[protein] + UDP-N-acetyl-alpha-D-glucosamine = N(4)-{beta-D-GlcNAc-(1-&gt;2)-[beta-D-GlcNAc-(1-&gt;4)]-alpha-D-Man-(1-&gt;3)-[alpha-D-Man-(1-&gt;3)-{alpha-D-Man-(1-&gt;6)}-alpha-D-Man-(1-&gt;6)]-beta-D-Man-(1-&gt;4)-beta-D-GlcNAc-(1-&gt;4)-beta-D-GlcNAc}-asparaginyl-[protein] + UDP + H(+). The enzyme catalyses N(4)-{beta-D-GlcNAc-(1-&gt;2)-alpha-D-Man-(1-&gt;3)-beta-D-Man-(1-&gt;4)-beta-D-GlcNAc-(1-&gt;4)-beta-D-GlcNAc}-asparaginyl-[protein] + UDP-N-acetyl-alpha-D-glucosamine = N(4)-{beta-D-GlcNAc-(1-&gt;2)-[beta-D-GlcNAc-(1-&gt;4)]-alpha-D-Man-(1-&gt;3)-beta-D-Man-(1-&gt;4)-beta-D-GlcNAc-(1-&gt;4)-beta-D-GlcNAc}-asparaginyl-[protein] + UDP + H(+). The protein operates within protein modification; protein glycosylation. Its function is as follows. Glycosyltransferase that catalyzes the transfer of GlcNAc from UDP-GlcNAc to the GlcNAcbeta1-2Manalpha1-3 arm of the core structure of N-linked glycans through a beta1-4 linkage and participates in the production of tri- and tetra-antennary N-linked sugar chains. Prefers complex-type N-glycans over hybrid-types. Has lower affinities for donors or acceptors than MGAT4A, suggesting that, under physiological conditions, it is not the main contributor in N-glycan biosynthesis. This is Alpha-1,3-mannosyl-glycoprotein 4-beta-N-acetylglucosaminyltransferase B from Mus musculus (Mouse).